A 330-amino-acid polypeptide reads, in one-letter code: AH receptor-interacting protein (330 aa).

Residues 31–121 form the PPIase FKBP-type domain; that stretch reads GTKATFHFRT…KDPLEGQRHC (91 aa). Position 43 is a phosphoserine (S43). TPR repeat units lie at residues 179–212, 231–264, and 265–298; these read VPVI…LKNL, TPLL…YDDN, and VKAY…DPAL.

As to quaternary structure, interacts with RET in the pituitary gland; this interaction prevents the formation of the AIP-survivin complex.

It is found in the cytoplasm. In terms of biological role, may play a positive role in AHR-mediated (aromatic hydrocarbon receptor) signaling, possibly by influencing its receptivity for ligand and/or its nuclear targeting. The sequence is that of AH receptor-interacting protein (Aip) from Mus musculus (Mouse).